The chain runs to 172 residues: MPPSSSNTAAASRSASKRLIKELETWSREQKEEKGIERLGPVNEGDLMEWEAVINGRGIGQGYDEGRWLVNISIPSTYPLAPPKMTFVTPIVHPNIALQNGEICLDLLKDAWTPAYSVLECVRAVRMLLGCPETDSPLNVDVAALLRSGDVLGTRKLVELWCQDSDSRYEGP.

The UBC core domain occupies 14-167 (SASKRLIKEL…VELWCQDSDS (154 aa)). Catalysis depends on Cys104, which acts as the Glycyl thioester intermediate.

Belongs to the ubiquitin-conjugating enzyme family.

The catalysed reaction is S-ubiquitinyl-[E1 ubiquitin-activating enzyme]-L-cysteine + [E2 ubiquitin-conjugating enzyme]-L-cysteine = [E1 ubiquitin-activating enzyme]-L-cysteine + S-ubiquitinyl-[E2 ubiquitin-conjugating enzyme]-L-cysteine.. The protein operates within protein modification; protein ubiquitination. Its function is as follows. Ubiquitin-conjugating enzyme E2 that is essential for peroxisome biogenesis and plays a key role in development, pathogenicity, and cell wall integrity. Required for long and very long-chain fatty acid utilization and is involved in lipid droplet accumulation and the elimination of reactive oxygen species. Controls the expression of proteins involved in protein biosynthesis, fatty acid metabolism, cell wall synthesis, oxidation-reduction reactions, as well as of the enzymes involved in the biosynthesis of the mycotoxin deoxynivalenol (DON), including TRI5, TRI6, and TRI10. The polypeptide is Ubiquitin-conjugating enzyme E2 PEX4 (Gibberella zeae (strain ATCC MYA-4620 / CBS 123657 / FGSC 9075 / NRRL 31084 / PH-1) (Wheat head blight fungus)).